Reading from the N-terminus, the 348-residue chain is Phosphoribosylformylglycinamidine cyclo-ligase (348 aa).

Belongs to the AIR synthase family.

It localises to the cytoplasm. The enzyme catalyses 2-formamido-N(1)-(5-O-phospho-beta-D-ribosyl)acetamidine + ATP = 5-amino-1-(5-phospho-beta-D-ribosyl)imidazole + ADP + phosphate + H(+). It functions in the pathway purine metabolism; IMP biosynthesis via de novo pathway; 5-amino-1-(5-phospho-D-ribosyl)imidazole from N(2)-formyl-N(1)-(5-phospho-D-ribosyl)glycinamide: step 2/2. The protein is Phosphoribosylformylglycinamidine cyclo-ligase of Cereibacter sphaeroides (strain ATCC 17025 / ATH 2.4.3) (Rhodobacter sphaeroides).